A 239-amino-acid chain; its full sequence is Leucyl/phenylalanyl-tRNA--protein transferase (239 aa).

The protein belongs to the L/F-transferase family.

Its subcellular location is the cytoplasm. It carries out the reaction N-terminal L-lysyl-[protein] + L-leucyl-tRNA(Leu) = N-terminal L-leucyl-L-lysyl-[protein] + tRNA(Leu) + H(+). The catalysed reaction is N-terminal L-arginyl-[protein] + L-leucyl-tRNA(Leu) = N-terminal L-leucyl-L-arginyl-[protein] + tRNA(Leu) + H(+). The enzyme catalyses L-phenylalanyl-tRNA(Phe) + an N-terminal L-alpha-aminoacyl-[protein] = an N-terminal L-phenylalanyl-L-alpha-aminoacyl-[protein] + tRNA(Phe). Functions in the N-end rule pathway of protein degradation where it conjugates Leu, Phe and, less efficiently, Met from aminoacyl-tRNAs to the N-termini of proteins containing an N-terminal arginine or lysine. This is Leucyl/phenylalanyl-tRNA--protein transferase from Syntrophus aciditrophicus (strain SB).